A 159-amino-acid polypeptide reads, in one-letter code: 3-hydroxyacyl-[acyl-carrier-protein] dehydratase FabZ (159 aa).

The active site involves H58.

It belongs to the thioester dehydratase family. FabZ subfamily.

It is found in the cytoplasm. The catalysed reaction is a (3R)-hydroxyacyl-[ACP] = a (2E)-enoyl-[ACP] + H2O. Functionally, involved in unsaturated fatty acids biosynthesis. Catalyzes the dehydration of short chain beta-hydroxyacyl-ACPs and long chain saturated and unsaturated beta-hydroxyacyl-ACPs. In Helicobacter pylori (strain J99 / ATCC 700824) (Campylobacter pylori J99), this protein is 3-hydroxyacyl-[acyl-carrier-protein] dehydratase FabZ.